A 278-amino-acid polypeptide reads, in one-letter code: Envelope glycoprotein L (278 aa).

The signal sequence occupies residues 1–30 (MCRRPDCGFSFSPGPVVLLWCCLLLPIVSS). Residues 43 to 256 (VPAECPELTR…DKYYAGLPPE (214 aa)) form the gL betaherpesvirus-type domain. C154 and C159 are disulfide-bonded.

This sequence belongs to the herpesviridae glycoprotein L (gL) family. Betaherpesvirinae gL subfamily. Interacts with glycoprotein H (gH); this interaction is necessary for the correct processing and cell surface expression of gH. Forms the envelope pentamer complex (PC) composed of gH, gL, UL128, UL130, and UL131A. The pentamer interacts with host NRP2. Forms the envelope trimer complex composed of gH, gL, and gO. The trimer interacts with host PDGFRA.

The protein resides in the virion membrane. It localises to the host cell membrane. It is found in the host Golgi apparatus. The protein localises to the host trans-Golgi network. In terms of biological role, the heterodimer glycoprotein H-glycoprotein L is required for the fusion of viral and plasma membranes leading to virus entry into the host cell. Acts as a functional inhibitor of gH and maintains gH in an inhibited form. Upon binding to host integrins, gL dissociates from gH leading to activation of the viral fusion glycoproteins gB and gH. In human cytomegalovirus, forms two distincts complexes to mediate viral entry, a trimer and a pentamer at the surface of the virion envelope. The gH-gL-gO trimer is required for infection in fibroblasts by interacting with host PDGFRA. The gH-gL-UL128-UL130-UL131A pentamer is essential for viral entry in epithelial, endothelial and myeloid cells via interaction with host NRP2. The polypeptide is Envelope glycoprotein L (Human cytomegalovirus (strain AD169) (HHV-5)).